The following is a 456-amino-acid chain: 3-isopropylmalate dehydratase large subunit (456 aa).

[4Fe-4S] cluster is bound by residues Cys-336, Cys-396, and Cys-399.

The protein belongs to the aconitase/IPM isomerase family. LeuC type 1 subfamily. Heterodimer of LeuC and LeuD. [4Fe-4S] cluster is required as a cofactor.

It carries out the reaction (2R,3S)-3-isopropylmalate = (2S)-2-isopropylmalate. It functions in the pathway amino-acid biosynthesis; L-leucine biosynthesis; L-leucine from 3-methyl-2-oxobutanoate: step 2/4. Functionally, catalyzes the isomerization between 2-isopropylmalate and 3-isopropylmalate, via the formation of 2-isopropylmaleate. The chain is 3-isopropylmalate dehydratase large subunit from Staphylococcus haemolyticus (strain JCSC1435).